Consider the following 436-residue polypeptide: Tol-Pal system protein TolB (436 aa).

The first 28 residues, 1 to 28 (MEMLRRNFFRLLMVLVAGCGLIASPANA), serve as a signal peptide directing secretion.

Belongs to the TolB family. As to quaternary structure, the Tol-Pal system is composed of five core proteins: the inner membrane proteins TolA, TolQ and TolR, the periplasmic protein TolB and the outer membrane protein Pal. They form a network linking the inner and outer membranes and the peptidoglycan layer.

The protein resides in the periplasm. Functionally, part of the Tol-Pal system, which plays a role in outer membrane invagination during cell division and is important for maintaining outer membrane integrity. This Rhizobium meliloti (strain 1021) (Ensifer meliloti) protein is Tol-Pal system protein TolB.